Here is a 362-residue protein sequence, read N- to C-terminus: Alternative oxidase, mitochondrial (362 aa).

Residues 1–64 (MNTPKVNILY…RGFTTTSVVR (64 aa)) constitute a mitochondrion transit peptide. A helical membrane pass occupies residues 156–176 (LVRFIFLESIAGVPGMVAGML). 3 residues coordinate Fe cation: Glu-163, Glu-202, and His-205. The chain crosses the membrane as a helical span at residues 222–242 (LILGAQGVFFNAMFLSYLVSP). Fe cation is bound by residues Glu-253, Glu-310, and His-313.

It belongs to the alternative oxidase family. It depends on Fe cation as a cofactor.

It is found in the mitochondrion inner membrane. Catalyzes cyanide-resistant oxygen consumption. May increase respiration when the cytochrome respiratory pathway is restricted, or in response to low temperatures. The sequence is that of Alternative oxidase, mitochondrial (aod-1) from Gelasinospora sp. (strain S23).